Here is a 600-residue protein sequence, read N- to C-terminus: MLPSHKQTISQLLSDAVGTLLPEGTNRPEIVLERPKQAAHGDIACNVALQLAKPLGTNPRELANRIADGIRADARGQRLVSAVEIAGPGFINLRLSPTARTDVLAAVFAEGDRYGAADLHDGAPVLVEFVSANPTGPLHVGHGRQAALGDALAALLEWQGHKVHREFYYNDAGVQIHNLAVSVQARARGFKPGDTGWPEAAYNGDYIADIAADYLAGKTVRASDGEPVTGARDVENIEAIRRFAVTYLRNEQDIDLQAFGVKFDHYYLESSLYADGKVQQTVDALIAAGKTYEQEGALWLRTTDDGDDKDRVMRKSDGSYTYFVPDVAYHTTKWGRGFTQVINVQGSDHHGTIARVRAGLQGLDLGIPKGYPDYVLHKMVTVMKDGAEVKISKRAGSYVTVRDLIEWSNGDAESEAGVDTIRACVESGAPNWPGRFTRGRDAVRFFLLSRKADTEFVFDVDLALKQSDENPVYYVQYAHARICSVFEQWHAREGGDAASLAGADLAAVAGPEASPQAVALVQRIAAFPDMLADAARELAPHAVAFYLRDLAGDFHAFYNADRVLVDDDAVKRARLALLAATRQVLRNGLAVIGVSAPQKM.

The 'HIGH' region signature appears at 132–142; sequence ANPTGPLHVGH.

This sequence belongs to the class-I aminoacyl-tRNA synthetase family. As to quaternary structure, monomer.

It is found in the cytoplasm. It carries out the reaction tRNA(Arg) + L-arginine + ATP = L-arginyl-tRNA(Arg) + AMP + diphosphate. This chain is Arginine--tRNA ligase, found in Ralstonia nicotianae (strain ATCC BAA-1114 / GMI1000) (Ralstonia solanacearum).